Here is a 207-residue protein sequence, read N- to C-terminus: Small ribosomal subunit protein uS4 (207 aa).

The region spanning 96–159 is the S4 RNA-binding domain; the sequence is RRLDNVVYRL…RASTFIADNI (64 aa).

The protein belongs to the universal ribosomal protein uS4 family. In terms of assembly, part of the 30S ribosomal subunit. Contacts protein S5. The interaction surface between S4 and S5 is involved in control of translational fidelity.

In terms of biological role, one of the primary rRNA binding proteins, it binds directly to 16S rRNA where it nucleates assembly of the body of the 30S subunit. With S5 and S12 plays an important role in translational accuracy. The protein is Small ribosomal subunit protein uS4 of Leptospira borgpetersenii serovar Hardjo-bovis (strain JB197).